Here is a 236-residue protein sequence, read N- to C-terminus: (5-formylfuran-3-yl)methyl phosphate synthase (236 aa).

The Schiff-base intermediate with substrate role is filled by Lys27. Lys85 acts as the Proton acceptor in catalysis.

It belongs to the MfnB family.

It carries out the reaction 2 D-glyceraldehyde 3-phosphate = 4-(hydroxymethyl)-2-furancarboxaldehyde phosphate + phosphate + 2 H2O. Its pathway is cofactor biosynthesis; methanofuran biosynthesis. Functionally, catalyzes the formation of 4-(hydroxymethyl)-2-furancarboxaldehyde phosphate (4-HFC-P) from two molecules of glyceraldehyde-3-P (GA-3-P). This Methanococcus maripaludis (strain C7 / ATCC BAA-1331) protein is (5-formylfuran-3-yl)methyl phosphate synthase.